We begin with the raw amino-acid sequence, 303 residues long: Pycsar effector protein XpPycTIR (303 aa).

Residue 14–138 coordinates a nucleoside 3',5'-cyclic phosphate; the sequence is LVATLTEHRL…RRIAATLARR (125 aa). Residues 154-273 form a TIR-like region; it reads RVFIMSSVEA…DLAGLTTIPY (120 aa).

It is found in the cytoplasm. It carries out the reaction NAD(+) + H2O = ADP-D-ribose + nicotinamide + H(+). Pycsar (pyrimidine cyclase system for antiphage resistance) provides immunity against bacteriophage. The pyrimidine cyclase (PycC) synthesizes cyclic nucleotides in response to infection; these serve as specific second messenger signals. The signals activate the adjacent effector, leading to bacterial cell death and abortive phage infection. A clade B Pycsar system. Its function is as follows. The effector gene of a two-gene Pycsar system. Expression of this and adjacent uridylate cyclase XpPycC (AC P0DV28) confers resistance to bacteriophage T7. When cells expressing the Pycsar system are infected by phage T7 at low multiplicity of infection (0.2 MOI) the culture survivey, at 2.0 MOI bacteria enter growth arrest. The same cells enter growth arrest after exposure to 2.5 mM cUMP but not cCMP; the effector protein responds only to the cUMP usually produced by its cognate NTP cyclase. NAD(+) levels in infected cells are depleted between 5 and 10 minutes after infection with T7 at MOI of 2. Probably only responds to cUMP. This chain is Pycsar effector protein XpPycTIR, found in Xanthomonas perforans.